The chain runs to 485 residues: Aspartyl/glutamyl-tRNA(Asn/Gln) amidotransferase subunit B (485 aa).

It belongs to the GatB/GatE family. GatB subfamily. In terms of assembly, heterotrimer of A, B and C subunits.

It catalyses the reaction L-glutamyl-tRNA(Gln) + L-glutamine + ATP + H2O = L-glutaminyl-tRNA(Gln) + L-glutamate + ADP + phosphate + H(+). The catalysed reaction is L-aspartyl-tRNA(Asn) + L-glutamine + ATP + H2O = L-asparaginyl-tRNA(Asn) + L-glutamate + ADP + phosphate + 2 H(+). Allows the formation of correctly charged Asn-tRNA(Asn) or Gln-tRNA(Gln) through the transamidation of misacylated Asp-tRNA(Asn) or Glu-tRNA(Gln) in organisms which lack either or both of asparaginyl-tRNA or glutaminyl-tRNA synthetases. The reaction takes place in the presence of glutamine and ATP through an activated phospho-Asp-tRNA(Asn) or phospho-Glu-tRNA(Gln). In Gluconobacter oxydans (strain 621H) (Gluconobacter suboxydans), this protein is Aspartyl/glutamyl-tRNA(Asn/Gln) amidotransferase subunit B.